The primary structure comprises 487 residues: MGSTDLNSKPHIVLLSSPGLGHLIPVLELGKRIVTLCNFDVTIFMVGSDTSAAEPQVLRSAMTPKLCEIIQLPPPNISCLIDPEATVCTRLFVLMREIRPAFRAAVSALKFRPAAIIVDLFGTESLEVAKELGIAKYVYIASNAWFLALTIYVPILDKEVEGEFVLQKEPMKIPGCRPVRTEEVVDPMLDRTNQQYSEYFRLGIEIPTADGILMNTWEALEPTTFGALRDVKFLGRVAKVPVFPIGPLRRQAGPCGSNCELLDWLDQQPKESVVYVSFGSGGTLSLEQMIELAWGLERSQQRFIWVVRQPTVKTGDAAFFTQGDGADDMSGYFPEGFLTRIQNVGLVVPQWSPQIHIMSHPSVGVFLSHCGWNSVLESITAGVPIIAWPIYAEQRMNATLLTEELGVAVRPKNLPAKEVVKREEIERMIRRIMVDEEGSEIRKRVRELKDSGEKALNEGGSSFNYMSALGNEWEKSWKTQRSERSLW.

The active-site Proton acceptor is the H22. An an anthocyanidin-binding site is contributed by H22. D119 functions as the Charge relay in the catalytic mechanism. The UDP-alpha-D-glucose site is built by Q354, H369, W372, N373, S374, and E377. An an anthocyanidin-binding site is contributed by A392. Residues E393 and Q394 each coordinate UDP-alpha-D-glucose.

This sequence belongs to the UDP-glycosyltransferase family. As to expression, faintly expressed in cotyledons.

The enzyme catalyses an anthocyanidin + UDP-alpha-D-glucose + H(+) = an anthocyanidin 3-O-beta-D-glucoside + UDP. Its pathway is pigment biosynthesis; anthocyanin biosynthesis. Functionally, in the presence of other necessary color factors, this glycosylation reaction allows the accumulation of anthocyanin pigments. The polypeptide is Anthocyanidin 3-O-glucosyltransferase 5 (GT5) (Manihot esculenta (Cassava)).